We begin with the raw amino-acid sequence, 2530 residues long: Agglutinin-like protein 2 (2530 aa).

The signal sequence occupies residues M1–A17. 4 cysteine pairs are disulfide-bonded: C73–C150, C96–C112, C205–C297, and C227–C256. 2 N-linked (GlcNAc...) asparagine glycosylation sites follow: N253 and N315. ALS repeat units follow at residues T364–P395, T400–P431, V437–P468, V473–P504, V509–P540, and V545–P576. N-linked (GlcNAc...) asparagine glycosylation occurs at N578. The ALS 7 repeat unit spans residues V581–P612. N614 carries an N-linked (GlcNAc...) asparagine glycan. ALS repeat units follow at residues V617–P648, V653–P684, V689–P720, V725–P756, V761–P792, V797–P828, and V833–P864. An N-linked (GlcNAc...) asparagine glycan is attached at N866. ALS repeat units lie at residues V869–P900, V905–P936, V941–P972, and V977–P1008. Residues T954–V967 are compositionally biased toward low complexity. The tract at residues T954–P975 is disordered. N-linked (GlcNAc...) asparagine glycosylation is present at N1010. ALS repeat units lie at residues V1013–P1044, V1049–I1077, V1085–P1116, and V1121–P1152. N-linked (GlcNAc...) asparagine glycosylation is present at N1154. ALS repeat units follow at residues V1157–P1188, V1193–P1224, V1229–P1260, V1265–P1296, V1301–P1332, and V1337–P1368. N1370 is a glycosylation site (N-linked (GlcNAc...) asparagine). Residues V1373–P1404 form an ALS 29 repeat. A glycan (N-linked (GlcNAc...) asparagine) is linked at N1406. One copy of the ALS 30 repeat lies at V1409–P1440. The N-linked (GlcNAc...) asparagine glycan is linked to N1442. ALS repeat units follow at residues V1445–P1476 and V1481–P1512. N-linked (GlcNAc...) asparagine glycosylation occurs at N1514. Residues V1517 to P1548 form an ALS 33 repeat. Residue N1550 is glycosylated (N-linked (GlcNAc...) asparagine). The stretch at V1553–P1584 is one ALS 34 repeat. N1586 carries an N-linked (GlcNAc...) asparagine glycan. An ALS 35 repeat occupies V1589–P1620. Residue N1622 is glycosylated (N-linked (GlcNAc...) asparagine). An ALS 36 repeat occupies V1625 to P1656. N-linked (GlcNAc...) asparagine glycosylation occurs at N1658. ALS repeat units lie at residues V1661–P1692 and V1697–P1728. N1730 carries N-linked (GlcNAc...) asparagine glycosylation. The ALS 39 repeat unit spans residues V1733 to P1764. A glycan (N-linked (GlcNAc...) asparagine) is linked at N1766. 2 ALS repeats span residues V1769 to P1800 and V1805 to P1836. An N-linked (GlcNAc...) asparagine glycan is attached at N1838. ALS repeat units lie at residues V1841 to P1872 and V1877 to E1907. N1910 is a glycosylation site (N-linked (GlcNAc...) asparagine). ALS repeat units follow at residues V1913–P1944 and V1949–P1980. An N-linked (GlcNAc...) asparagine glycan is attached at N1982. ALS repeat units lie at residues V1985–P2016, V2021–P2052, and V2057–P2088. N2090 carries N-linked (GlcNAc...) asparagine glycosylation. 2 ALS repeats span residues V2093 to P2124 and V2129 to I2157. N-linked (GlcNAc...) asparagine glycosylation is present at N2197. Disordered stretches follow at residues V2200–N2235 and T2274–T2494. The segment covering P2204–S2233 has biased composition (low complexity). N-linked (GlcNAc...) asparagine glycosylation is present at N2281. Positions G2282–S2296 are enriched in low complexity. Composition is skewed to polar residues over residues S2329 to A2420 and N2429 to I2452. N-linked (GlcNAc...) asparagine glycosylation is found at N2444 and N2466. Composition is skewed to low complexity over residues Q2453 to P2471 and S2482 to T2494. D2507 carries GPI-anchor amidated aspartate lipidation. The propeptide at G2508 to F2530 is removed in mature form.

It belongs to the ALS family. In terms of processing, N-glycosylated and O-glycosylated. Post-translationally, the GPI-anchor is attached to the protein in the endoplasmic reticulum and serves to target the protein to the cell surface. There, the glucosamine-inositol phospholipid moiety is cleaved off and the GPI-modified mannoprotein is covalently attached via its lipidless GPI glycan remnant to the 1,6-beta-glucan of the outer cell wall layer.

It is found in the cell membrane. It localises to the secreted. The protein resides in the cell wall. Its function is as follows. Cell surface adhesion protein which mediates both yeast-to-host tissue adherence and yeast aggregation. Plays an important role in the pathogenesis of C.albicans infections. This Candida albicans (strain SC5314 / ATCC MYA-2876) (Yeast) protein is Agglutinin-like protein 2 (ALS2).